We begin with the raw amino-acid sequence, 347 residues long: Ataxin-7-like protein 3 (347 aa).

The SGF11-type zinc finger occupies 84-105 (CVCPNCSRSIAASRFAPHLEKC). Positions 116–125 (ANRRIANSNN) are enriched in low complexity. The tract at residues 116–184 (ANRRIANSNN…GELSNSDPFK (69 aa)) is disordered. A phosphoserine mark is found at S129 and S131. The span at 132–141 (DQEDNDDIND) shows a compositional bias: acidic residues. Residues 196 to 263 (LGPEELRSLL…SLDNDGFDMT (68 aa)) enclose the SCA7 domain. Low complexity predominate over residues 275–288 (DGSSDLSPSDSGSS). Positions 275–347 (DGSSDLSPSD…PTPSIYDDIN (73 aa)) are disordered. Phosphoserine is present on residues S278, S281, and S326.

The protein belongs to the SGF11 family. In terms of assembly, component of some SAGA transcription coactivator-HAT complexes, at least composed of ATXN7, ATXN7L3, ENY2, GCN5L2, SUPT3H, TAF10, TRRAP and USP22. Within the SAGA complex, ENY2, ATXN7, ATXN7L3, and USP22 form an additional subcomplex of SAGA called the DUB module (deubiquitination module). Interacts directly with ENY2 and USP22.

It is found in the nucleus. Component of the transcription regulatory histone acetylation (HAT) complex SAGA, a multiprotein complex that activates transcription by remodeling chromatin and mediating histone acetylation and deubiquitination. Within the SAGA complex, participates in a subcomplex that specifically deubiquitinates both histones H2A and H2B. The SAGA complex is recruited to specific gene promoters by activators such as MYC, where it is required for transcription. Required for nuclear receptor-mediated transactivation. Within the complex, it is required to recruit USP22 and ENY2 into the SAGA complex. Regulates H2B monoubiquitination (H2Bub1) levels. Affects subcellular distribution of ENY2, USP22 and ATXN7L3B. This is Ataxin-7-like protein 3 (Atxn7l3) from Mus musculus (Mouse).